The following is a 473-amino-acid chain: Putative tyrosine recombinase XerC (473 aa).

The region spanning 4–82 is the Core-binding (CB) domain; the sequence is MTLPELTQEY…HLRTVYRYAM (79 aa). Residues 118-305 form the Tyr recombinase domain; that stretch reads RNWLRFLVQE…DYDLMREVMN (188 aa). Active-site residues include R156, K183, H256, R259, and H283. The active-site O-(3'-phospho-DNA)-tyrosine intermediate is Y292. The span at 341–352 shows a compositional bias: polar residues; the sequence is SGTELQPATTES. Residues 341-365 are disordered; the sequence is SGTELQPATTESSEAKKADDTASNP.

It belongs to the 'phage' integrase family.

Its subcellular location is the cytoplasm. Functionally, site-specific tyrosine recombinase, which acts by catalyzing the cutting and rejoining of the recombining DNA molecules. The protein is Putative tyrosine recombinase XerC of Pseudomonas syringae.